A 158-amino-acid polypeptide reads, in one-letter code: Regulator of sigma D (158 aa).

This sequence belongs to the Rsd/AlgQ family. As to quaternary structure, interacts with RpoD.

The protein localises to the cytoplasm. In terms of biological role, binds RpoD and negatively regulates RpoD-mediated transcription activation by preventing the interaction between the primary sigma factor RpoD with the catalytic core of the RNA polymerase and with promoter DNA. May be involved in replacement of the RNA polymerase sigma subunit from RpoD to RpoS during the transition from exponential growth to the stationary phase. The polypeptide is Regulator of sigma D (Shigella boydii serotype 4 (strain Sb227)).